A 193-amino-acid chain; its full sequence is Ion-translocating oxidoreductase complex subunit A (193 aa).

The next 6 membrane-spanning stretches (helical) occupy residues 5–25, 39–59, 62–82, 102–122, 134–154, and 171–191; these read LLLFVGTVLVNNFVLVKFLGL, IGMGFATTFVMTIASISSWLM, FILVPLDLLYLRTLSFILVIA, LLGIFLPLITTNCAVLGVALL, AVYGFGAAVGFSLVMVLFAAI, and SIGLITAGLMSLAFMGFSGLV.

This sequence belongs to the NqrDE/RnfAE family. As to quaternary structure, the complex is composed of six subunits: RnfA, RnfB, RnfC, RnfD, RnfE and RnfG.

It is found in the cell inner membrane. Functionally, part of a membrane-bound complex that couples electron transfer with translocation of ions across the membrane. This chain is Ion-translocating oxidoreductase complex subunit A, found in Proteus mirabilis (strain HI4320).